Here is a 1116-residue protein sequence, read N- to C-terminus: MLMTGSVGDGSEFDWEDQKTFISRDGGLTWRFVHNSSGLYATGDLGNIIVYIPYDPEEDGDFQSEFYYSLDQGRTWNEYELTNAISSVHPYKLINPTPDGSGSKFIFKGTFATTDSETNSITSLKGVEYIIDFSAAFDSRTCEEEDFEDWDLADGKCVNGAKYKYRRRKQDAQCLVKKAFKDLSLDETPCNSCGESDYECSFEFVRDANGLCIPDYNLIAFSNICDKSKDKSVLVEPLQLIKGDECKTPMKIEPVDIPCDEIPEEGSSDREIVTTENKFDFEIKFYQYFDTVADESLVMLNSIGDAYISHDGGQTIKRFDTNGEKIVEVVFNPYFNSSAYLFGSKGNIFSTHDRGHSFMIAKLPEARQLGMPLDFSAKAQDTFIYYGGKNCESILSPECHAVAYLTKDGGETFTEMLDNAIHCEFAGTLFEYPSNEEMVMCQVKKKSSETRSLVSSIDFFQGDNKIIFENIIGYLSTGGYIIVAVPHEDNELRAYVTIDGTEFAEAKFPYGQDVSKQEAFTILGSEKGSIFLHLATNLESGHDFGNLLKSNSNGTSFVTLEHAVNRNTFGYVDFEKVQGLEGIIITNIVSNREKVGENKEDEQLKTKITFNDGSDWNFLKPPKKDSEGKKFPCDSVSLDKCSLHLHGYTERKDIRDTYSSGSALGMMFGVGNVGDKLLPYEECSTFLTTDGGETWTEVKKGPHQWEYGDHGGVLVLVPENAETDSISYSTDFGKTWKDYKFCGDKVLVKDIITVPRDSALRFLLFGEAKNMGSGSFRTYTIDFRNIFERQCEFDITGKKRADFKYSPLGSRTGCLFGHQTEFLRKTDEKCFIGNIPLSEFSRNVKNCSCTRQDFECDYNFYKASDGTCKLVKGLSSANGADICKKEPDLIEYYDSSGYRKIPLSTCKGGLKLDAHLAPHPCPGKEKAFREKYSINTGAYALVFVTILLVIFFAAWFVYDRGIRRNGGFSRFEEIRLGDDGLIENNRTDRVVNIIVRLGLCISLITKSAFQRTKAGVARFSSKLRARFGNRKGPTYSSLLQGQFSDESDGLHEDANDLSSFTSQDSNFEIEQEDAYRPEQEHTSQIDQPATSNIPDALPARSAIHKPDSTAVRNEDE.

The stretch at 21 to 32 (FISRDGGLTWRF) is one BNR 1 repeat. The N-linked (GlcNAc...) asparagine glycan is linked to N35. 2 BNR repeats span residues 67–78 (YYSLDQGRTWNE) and 307–318 (YISHDGGQTIKR). An N-linked (GlcNAc...) asparagine glycan is attached at N336. The BNR 4 repeat unit spans residues 404–415 (YLTKDGGETFTE). N-linked (GlcNAc...) asparagine glycosylation is present at N553. BNR repeat units lie at residues 607-618 (KITFNDGSDWNF), 686-697 (FLTTDGGETWTE), and 727-738 (SYSTDFGKTWKD). N846 is a glycosylation site (N-linked (GlcNAc...) asparagine). Residues 934-957 (INTGAYALVFVTILLVIFFAAWFV) form a helical membrane-spanning segment. Residue N985 is glycosylated (N-linked (GlcNAc...) asparagine). The disordered stretch occupies residues 1069 to 1116 (IEQEDAYRPEQEHTSQIDQPATSNIPDALPARSAIHKPDSTAVRNEDE). A compositionally biased stretch (basic and acidic residues) spans 1073–1083 (DAYRPEQEHTS). The span at 1084 to 1093 (QIDQPATSNI) shows a compositional bias: polar residues.

The protein resides in the membrane. This is an uncharacterized protein from Saccharomyces cerevisiae (strain ATCC 204508 / S288c) (Baker's yeast).